The chain runs to 396 residues: Phosphoglycerate kinase (396 aa).

Substrate-binding positions include 21 to 23 (DFN), Arg36, 59 to 62 (HLGR), Arg119, and Arg156. Residues Lys207, Glu325, and 352–355 (GGDS) each bind ATP.

It belongs to the phosphoglycerate kinase family. As to quaternary structure, monomer.

It is found in the cytoplasm. The catalysed reaction is (2R)-3-phosphoglycerate + ATP = (2R)-3-phospho-glyceroyl phosphate + ADP. Its pathway is carbohydrate degradation; glycolysis; pyruvate from D-glyceraldehyde 3-phosphate: step 2/5. This chain is Phosphoglycerate kinase, found in Lacticaseibacillus casei (strain BL23) (Lactobacillus casei).